We begin with the raw amino-acid sequence, 23 residues long: Paralytic peptide 1 (23 aa).

The cysteines at positions 7 and 19 are disulfide-linked.

It belongs to the GBP/PSP1/paralytic peptide family. As to expression, hemolymph.

Causes rapid, rigid paralysis when injected into Lepidopteran larvae. The physiological role may be to reduce hemolymph loss following injury and promote wound healing. The protein is Paralytic peptide 1 of Manduca sexta (Tobacco hawkmoth).